A 371-amino-acid chain; its full sequence is MLKFTLHKKDGYARRGTLELNHGKIETPVFMPVGTYGSVKAMNPQNLHDIKAQIILGNTYHLWLRPGLEVVEQFGGLHGFIGWDKPILTDSGGFQVFSLSDMRKLTEEGCTFKSPINGDKLFLSPEISMKIQTVLNSDIAMQLDECTPGEATREQARKSLQMSLRWAERSKKAFEDLKNPNALFGIVQGAMYEDLREESLKGLEELDFPGLAIGGLSVGEPKPEMYRMLRAVGPILPEHKPHYLMGVGTPEDLVYGVAHGVDMFDCVMPTRNARNGWLFTRFGDLKIKNAKHKLDKRPIDESCTCYACQNFSRAYLHHLHRAGEILGAQLNTIHNLHFYQVIMAEMREAVEQGKFADWQAQFHENRARGTD.

Catalysis depends on Asp90, which acts as the Proton acceptor. Substrate is bound by residues 90 to 94 (DSGGF), Asp144, Gln188, and Gly215. Positions 246–252 (GVGTPED) are RNA binding. Asp265 acts as the Nucleophile in catalysis. The tract at residues 270–274 (TRNAR) is RNA binding; important for wobble base 34 recognition. Cys303, Cys305, Cys308, and His334 together coordinate Zn(2+).

This sequence belongs to the queuine tRNA-ribosyltransferase family. As to quaternary structure, homodimer. Within each dimer, one monomer is responsible for RNA recognition and catalysis, while the other monomer binds to the replacement base PreQ1. The cofactor is Zn(2+).

It catalyses the reaction 7-aminomethyl-7-carbaguanine + guanosine(34) in tRNA = 7-aminomethyl-7-carbaguanosine(34) in tRNA + guanine. It participates in tRNA modification; tRNA-queuosine biosynthesis. Catalyzes the base-exchange of a guanine (G) residue with the queuine precursor 7-aminomethyl-7-deazaguanine (PreQ1) at position 34 (anticodon wobble position) in tRNAs with GU(N) anticodons (tRNA-Asp, -Asn, -His and -Tyr). Catalysis occurs through a double-displacement mechanism. The nucleophile active site attacks the C1' of nucleotide 34 to detach the guanine base from the RNA, forming a covalent enzyme-RNA intermediate. The proton acceptor active site deprotonates the incoming PreQ1, allowing a nucleophilic attack on the C1' of the ribose to form the product. After dissociation, two additional enzymatic reactions on the tRNA convert PreQ1 to queuine (Q), resulting in the hypermodified nucleoside queuosine (7-(((4,5-cis-dihydroxy-2-cyclopenten-1-yl)amino)methyl)-7-deazaguanosine). This Neisseria meningitidis serogroup A / serotype 4A (strain DSM 15465 / Z2491) protein is Queuine tRNA-ribosyltransferase.